A 122-amino-acid polypeptide reads, in one-letter code: Large ribosomal subunit protein uL14 (122 aa).

The protein belongs to the universal ribosomal protein uL14 family. Part of the 50S ribosomal subunit. Forms a cluster with proteins L3 and L19. In the 70S ribosome, L14 and L19 interact and together make contacts with the 16S rRNA in bridges B5 and B8.

Its function is as follows. Binds to 23S rRNA. Forms part of two intersubunit bridges in the 70S ribosome. The polypeptide is Large ribosomal subunit protein uL14 (Malacoplasma penetrans (strain HF-2) (Mycoplasma penetrans)).